Reading from the N-terminus, the 262-residue chain is Short-chain reductase protein NovJ (262 aa).

Residues G23–R26 and D73–V74 contribute to the NADP(+) site. S152 contributes to the substrate binding site. Y164 acts as the Proton acceptor in catalysis. Y164 to K168 contacts NADP(+).

This sequence belongs to the short-chain dehydrogenases/reductases (SDR) family. As to quaternary structure, heterotetramer; the NovJ(2)K(2) heterotetramer is composed of subunits of 2 NovJ and 2 subunits of NovK.

It functions in the pathway antibiotic biosynthesis; novobiocin biosynthesis. Its function is as follows. Catalytic subunit of the NovJ(2)K(2) heterotetramer that catalyzes the NADPH-dependent reduction of the tyrosyl moiety of L-beta-OH-Tyr-S-NovH intermediate to yield the tethered beta-ketotyrosyl-S-NovH in the novobiocin biosynthesis pathway. Novobiocin is an aminocoumarin family antibiotic that targets bacterial DNA gyrases. The sequence is that of Short-chain reductase protein NovJ (novJ) from Streptomyces niveus (Streptomyces spheroides).